A 213-amino-acid polypeptide reads, in one-letter code: Small ribosomal subunit protein uS3 (213 aa).

In terms of domain architecture, KH type-2 spans 38–106 (IREYLENRLS…RVHINIVEIK (69 aa)).

The protein belongs to the universal ribosomal protein uS3 family. As to quaternary structure, part of the 30S ribosomal subunit. Forms a tight complex with proteins S10 and S14.

Binds the lower part of the 30S subunit head. Binds mRNA in the 70S ribosome, positioning it for translation. In Oceanobacillus iheyensis (strain DSM 14371 / CIP 107618 / JCM 11309 / KCTC 3954 / HTE831), this protein is Small ribosomal subunit protein uS3.